Reading from the N-terminus, the 785-residue chain is Endonuclease MutS2 (785 aa).

Residue 334–341 participates in ATP binding; that stretch reads GPNTGGKT. Positions 710 to 785 constitute a Smr domain; the sequence is LDLRGYNVED…GVGATIAELK (76 aa).

The protein belongs to the DNA mismatch repair MutS family. MutS2 subfamily. Homodimer. Binds to stalled ribosomes, contacting rRNA.

Its function is as follows. Endonuclease that is involved in the suppression of homologous recombination and thus may have a key role in the control of bacterial genetic diversity. Functionally, acts as a ribosome collision sensor, splitting the ribosome into its 2 subunits. Detects stalled/collided 70S ribosomes which it binds and splits by an ATP-hydrolysis driven conformational change. Acts upstream of the ribosome quality control system (RQC), a ribosome-associated complex that mediates the extraction of incompletely synthesized nascent chains from stalled ribosomes and their subsequent degradation. Probably generates substrates for RQC. This chain is Endonuclease MutS2, found in Brevibacillus brevis (strain 47 / JCM 6285 / NBRC 100599).